The primary structure comprises 298 residues: Acetylglutamate kinase (298 aa).

Residues 61–62, arginine 83, and asparagine 188 each bind substrate; that span reads GG.

The protein belongs to the acetylglutamate kinase family. ArgB subfamily.

It localises to the cytoplasm. It carries out the reaction N-acetyl-L-glutamate + ATP = N-acetyl-L-glutamyl 5-phosphate + ADP. The protein operates within amino-acid biosynthesis; L-arginine biosynthesis; N(2)-acetyl-L-ornithine from L-glutamate: step 2/4. In terms of biological role, catalyzes the ATP-dependent phosphorylation of N-acetyl-L-glutamate. The chain is Acetylglutamate kinase from Syntrophobacter fumaroxidans (strain DSM 10017 / MPOB).